Reading from the N-terminus, the 512-residue chain is Probable DNA ligase (512 aa).

E208 provides a ligand contact to ATP. K210 acts as the N6-AMP-lysine intermediate in catalysis. R215, R230, E259, F299, R374, and K380 together coordinate ATP.

This sequence belongs to the ATP-dependent DNA ligase family. It depends on Mg(2+) as a cofactor.

The enzyme catalyses ATP + (deoxyribonucleotide)n-3'-hydroxyl + 5'-phospho-(deoxyribonucleotide)m = (deoxyribonucleotide)n+m + AMP + diphosphate.. In terms of biological role, DNA ligase that seals nicks in double-stranded DNA during DNA replication, DNA recombination and DNA repair. The chain is Probable DNA ligase from Streptomyces avermitilis (strain ATCC 31267 / DSM 46492 / JCM 5070 / NBRC 14893 / NCIMB 12804 / NRRL 8165 / MA-4680).